Reading from the N-terminus, the 555-residue chain is Energy-dependent translational throttle protein EttA (555 aa).

ABC transporter domains follow at residues 6–259 (YTMH…AQEA) and 324–550 (LEVS…RIKY). Position 39–46 (39–46 (GLNGAGKS)) interacts with ATP. Positions 95 to 139 (SEVVNALKRLDEVYALYADPDADFDKLAAEQGRLEEIIQAHDGHN) are arm. The segment at 242–322 (GNYSSWLEQK…IPPGPRLGDK (81 aa)) is ptIM. Residue 356–363 (GPNGAGKS) coordinates ATP.

It belongs to the ABC transporter superfamily. ABCF family. Translational throttle EttA subfamily. As to quaternary structure, monomer. Probably contacts ribosomal proteins L1, L5, L33 and S7, the 16S and 23S rRNA and the P-site containing tRNA(fMet).

It localises to the cytoplasm. The catalysed reaction is ATP + H2O = ADP + phosphate + H(+). A translation factor that gates the progression of the 70S ribosomal initiation complex (IC, containing tRNA(fMet) in the P-site) into the translation elongation cycle by using a mechanism sensitive to the ATP/ADP ratio. Binds to the 70S ribosome E-site where it modulates the state of the translating ribosome during subunit translocation. ATP hydrolysis probably frees it from the ribosome, which can enter the elongation phase. The chain is Energy-dependent translational throttle protein EttA from Escherichia coli O6:H1 (strain CFT073 / ATCC 700928 / UPEC).